The sequence spans 57 residues: Beta-defensin 3 (57 aa).

Q16 is subject to Pyrrolidone carboxylic acid. 3 disulfides stabilise this stretch: C24/C53, C31/C46, and C36/C54.

It belongs to the beta-defensin family. Neutrophilic granules.

The protein resides in the secreted. Has bactericidal activity. Active against E.coli ML35 and S.aureus 502A. The polypeptide is Beta-defensin 3 (DEFB3) (Bos taurus (Bovine)).